The sequence spans 281 residues: Diaminopimelate epimerase (281 aa).

2 residues coordinate substrate: Asn13 and Asn66. The Proton donor role is filled by Cys75. Residues 76–77 (GN), Asn164, Asn197, and 215–216 (ER) contribute to the substrate site. Residue Cys224 is the Proton acceptor of the active site. 225 to 226 (GT) is a binding site for substrate.

It belongs to the diaminopimelate epimerase family. As to quaternary structure, homodimer.

Its subcellular location is the cytoplasm. The catalysed reaction is (2S,6S)-2,6-diaminopimelate = meso-2,6-diaminopimelate. The protein operates within amino-acid biosynthesis; L-lysine biosynthesis via DAP pathway; DL-2,6-diaminopimelate from LL-2,6-diaminopimelate: step 1/1. Functionally, catalyzes the stereoinversion of LL-2,6-diaminopimelate (L,L-DAP) to meso-diaminopimelate (meso-DAP), a precursor of L-lysine and an essential component of the bacterial peptidoglycan. This is Diaminopimelate epimerase from Microcystis aeruginosa (strain NIES-843 / IAM M-2473).